Here is a 194-residue protein sequence, read N- to C-terminus: Acid tolerance regulatory protein ActR (194 aa).

The 115-residue stretch at Ser24–Pro138 folds into the Response regulatory domain. The residue at position 73 (Asp73) is a 4-aspartylphosphate.

Post-translationally, phosphorylated by ActS.

Member of the two-component regulatory system ActS/ActR acting in acid tolerance. These data implicate that a two-component sensor may be involved in pH sensing and/or response. The protein is Acid tolerance regulatory protein ActR (actR) of Sinorhizobium medicae (strain WSM419) (Ensifer medicae).